The chain runs to 47 residues: Small, acid-soluble spore protein N (47 aa).

Positions 1–12 (MSNPKGSRKHFV) are enriched in basic residues. Residues 1–47 (MSNPKGSRKHFVPNHIGTQPRAAGGNKGKQMQDQSGQHAQVIQTKGE) are disordered. Polar residues predominate over residues 29 to 47 (KQMQDQSGQHAQVIQTKGE).

Belongs to the SspN family.

It localises to the spore core. In Geobacillus kaustophilus (strain HTA426), this protein is Small, acid-soluble spore protein N.